We begin with the raw amino-acid sequence, 710 residues long: Bifunctional lysine-specific demethylase and histidyl-hydroxylase NO66 (710 aa).

The segment at 103–137 (TDEMNKTKKKQKKIMKKEIRKRTKRKRKSVNKREL) is disordered. Residues 109–132 (TKKKQKKIMKKEIRKRTKRKRKSV) are compositionally biased toward basic residues. The region spanning 359 to 506 (CSIQLTNPQS…DLLERVIPPA (148 aa)) is the JmjC domain. Fe cation contacts are provided by His-405, Asp-407, and His-472.

The protein belongs to the ROX family. NO66 subfamily. The cofactor is Fe(2+).

Its subcellular location is the nucleus. It catalyses the reaction N(6),N(6)-dimethyl-L-lysyl(36)-[histone H3] + 2 2-oxoglutarate + 2 O2 = L-lysyl(36)-[histone H3] + 2 formaldehyde + 2 succinate + 2 CO2. Oxygenase that can act as both a histone lysine demethylase and a ribosomal histidine hydroxylase. Specifically demethylates 'Lys-4' (H3K4me) and 'Lys-36' (H3K36me) of histone H3, thereby playing a central role in histone code. The chain is Bifunctional lysine-specific demethylase and histidyl-hydroxylase NO66 from Brugia malayi (Filarial nematode worm).